The chain runs to 562 residues: RNA N(6)-adenosine-methyltransferase METTL16 (562 aa).

The interval 17 to 20 (PPDF) is RNA-binding. R82, G110, S114, E133, T164, and N184 together coordinate S-adenosyl-L-methionine. Positions 163–167 (KTLLM) are K-loop. RNA-binding regions lie at residues 199–211 (SRNP…SSVN), 250–254 (GKKCS), and 277–283 (QGRTMRW). The tract at residues 289–400 (FYDDVTVPSP…QLREVPRAPE (112 aa)) is VCR 1. S329 bears the Phosphoserine mark. Positions 402–413 (VIQALEEKKPTP) are enriched in basic and acidic residues. The segment at 402–498 (VIQALEEKKP…DQEASEQFGS (97 aa)) is disordered. Over residues 458 to 467 (ENPEPTEDER) the composition is skewed to acidic residues. Residue T463 is modified to Phosphothreonine. A compositionally biased stretch (polar residues) spans 480–496 (CQGSSNGAQDQEASEQF). The segment at 514-562 (YLFKCLINVKKEVDDALVEMHWVEGQNRDLMNQLCTYIRNQIFRLVAVN) is VCR 2.

Belongs to the methyltransferase superfamily. METTL16/RlmF family. In terms of assembly, interacts with MEPCE. Interacts with LARP7.

It localises to the nucleus. The protein localises to the cytoplasm. It carries out the reaction adenosine in U6 snRNA + S-adenosyl-L-methionine = N(6)-methyladenosine in U6 snRNA + S-adenosyl-L-homocysteine + H(+). The enzyme catalyses an adenosine in mRNA + S-adenosyl-L-methionine = an N(6)-methyladenosine in mRNA + S-adenosyl-L-homocysteine + H(+). Methyltransferase activity is autoinhibited by the K-loop region that blocks S-adenosyl-L-methionine-binding. Upon activation, K-loop changes conformation, allowing S-adenosyl-L-methionine-binding and subsequent methyltransferase activity. mRNA N6-adenosine-methyltransferase activity is inhibited by zinc. RNA N6-methyltransferase that methylates adenosine residues at the N(6) position of a subset of RNAs and is involved in S-adenosyl-L-methionine homeostasis by regulating expression of MAT2A transcripts. Able to N6-methylate a subset of mRNAs and U6 small nuclear RNAs (U6 snRNAs). In contrast to the METTL3-METTL14 heterodimer, only able to methylate a limited number of RNAs: requires both a 5'UACAGAGAA-3' nonamer sequence and a specific RNA structure. Plays a key role in S-adenosyl-L-methionine homeostasis by mediating N6-methylation of MAT2A mRNAs, altering splicing of MAT2A transcripts: in presence of S-adenosyl-L-methionine, binds the 3'-UTR region of MAT2A mRNA and specifically N6-methylates the first hairpin of MAT2A mRNA, preventing recognition of their 3'-splice site by U2AF1/U2AF35, thereby inhibiting splicing and protein production of S-adenosylmethionine synthase. In S-adenosyl-L-methionine-limiting conditions, binds the 3'-UTR region of MAT2A mRNA but stalls due to the lack of a methyl donor, preventing N6-methylation and promoting expression of MAT2A. In addition to mRNAs, also able to mediate N6-methylation of U6 small nuclear RNA (U6 snRNA): specifically N6-methylates adenine in position 43 of U6 snRNAs. Also able to bind various lncRNAs, such as 7SK snRNA (7SK RNA) or 7SL RNA. Specifically binds the 3'-end of the MALAT1 long non-coding RNA. In Homo sapiens (Human), this protein is RNA N(6)-adenosine-methyltransferase METTL16.